Here is a 543-residue protein sequence, read N- to C-terminus: CTP synthase (543 aa).

The segment at 1–265 (MARYIFITGG…DDEVLAAFAI (265 aa)) is amidoligase domain. S13 lines the CTP pocket. S13 contributes to the UTP binding site. Position 14–19 (14–19 (SLGKGL)) interacts with ATP. Y54 is a binding site for L-glutamine. Position 71 (D71) interacts with ATP. Residues D71 and E139 each coordinate Mg(2+). Residues 146 to 148 (DIE), 186 to 191 (KTKPTQ), and K222 contribute to the CTP site. Residues 186-191 (KTKPTQ) and K222 contribute to the UTP site. 238–240 (RDA) contacts ATP. The Glutamine amidotransferase type-1 domain occupies 291 to 542 (TIAIVGKYTG…VQAALVQSRL (252 aa)). L-glutamine is bound at residue G353. C380 acts as the Nucleophile; for glutamine hydrolysis in catalysis. L-glutamine contacts are provided by residues 381–384 (FGMQ), E404, and R470. Catalysis depends on residues H515 and E517.

It belongs to the CTP synthase family. In terms of assembly, homotetramer.

The catalysed reaction is UTP + L-glutamine + ATP + H2O = CTP + L-glutamate + ADP + phosphate + 2 H(+). It carries out the reaction L-glutamine + H2O = L-glutamate + NH4(+). The enzyme catalyses UTP + NH4(+) + ATP = CTP + ADP + phosphate + 2 H(+). It functions in the pathway pyrimidine metabolism; CTP biosynthesis via de novo pathway; CTP from UDP: step 2/2. Its activity is regulated as follows. Allosterically activated by GTP, when glutamine is the substrate; GTP has no effect on the reaction when ammonia is the substrate. The allosteric effector GTP functions by stabilizing the protein conformation that binds the tetrahedral intermediate(s) formed during glutamine hydrolysis. Inhibited by the product CTP, via allosteric rather than competitive inhibition. Catalyzes the ATP-dependent amination of UTP to CTP with either L-glutamine or ammonia as the source of nitrogen. Regulates intracellular CTP levels through interactions with the four ribonucleotide triphosphates. This chain is CTP synthase, found in Rhodopseudomonas palustris (strain ATCC BAA-98 / CGA009).